A 130-amino-acid polypeptide reads, in one-letter code: Lysozyme C (130 aa).

One can recognise a C-type lysozyme domain in the interval 1-130; the sequence is KVWERCALAR…VEQYVEGCDL (130 aa). 4 disulfides stabilise this stretch: cysteine 6–cysteine 128, cysteine 30–cysteine 116, cysteine 65–cysteine 81, and cysteine 77–cysteine 95. Catalysis depends on residues glutamate 35 and aspartate 53.

This sequence belongs to the glycosyl hydrolase 22 family. In terms of assembly, monomer.

It carries out the reaction Hydrolysis of (1-&gt;4)-beta-linkages between N-acetylmuramic acid and N-acetyl-D-glucosamine residues in a peptidoglycan and between N-acetyl-D-glucosamine residues in chitodextrins.. In terms of biological role, lysozymes have primarily a bacteriolytic function; those in tissues and body fluids are associated with the monocyte-macrophage system and enhance the activity of immunoagents. This chain is Lysozyme C (LYZ), found in Camelus dromedarius (Dromedary).